The following is a 43-amino-acid chain: Cytin chain A (43 aa).

Belongs to the protease inhibitor I13 (potato type I serine protease inhibitor) family. In terms of assembly, heterodimer of an A chain and a B chain, linked by a disulfide bond.

In terms of biological role, inhibitor of chymotrypsin. In Theromyzon tessulatum (Duck leech), this protein is Cytin chain A.